Here is a 394-residue protein sequence, read N- to C-terminus: DNA replication and repair protein RecF (394 aa).

30 to 37 contacts ATP; the sequence is GRNGFGKT.

This sequence belongs to the RecF family.

The protein resides in the cytoplasm. Its function is as follows. The RecF protein is involved in DNA metabolism; it is required for DNA replication and normal SOS inducibility. RecF binds preferentially to single-stranded, linear DNA. It also seems to bind ATP. This is DNA replication and repair protein RecF from Corynebacterium glutamicum (strain ATCC 13032 / DSM 20300 / JCM 1318 / BCRC 11384 / CCUG 27702 / LMG 3730 / NBRC 12168 / NCIMB 10025 / NRRL B-2784 / 534).